The following is a 218-amino-acid chain: Glycerol-3-phosphate acyltransferase (218 aa).

5 helical membrane-spanning segments follow: residues 5–25 (ALGM…ILIC), 53–73 (LAAA…VWLA), 80–100 (PFYL…PVFF), 115–135 (IAAI…LTVL), and 138–158 (GYSS…VWWF).

The protein belongs to the PlsY family. Probably interacts with PlsX.

The protein resides in the cell inner membrane. The catalysed reaction is an acyl phosphate + sn-glycerol 3-phosphate = a 1-acyl-sn-glycero-3-phosphate + phosphate. It participates in lipid metabolism; phospholipid metabolism. In terms of biological role, catalyzes the transfer of an acyl group from acyl-phosphate (acyl-PO(4)) to glycerol-3-phosphate (G3P) to form lysophosphatidic acid (LPA). This enzyme utilizes acyl-phosphate as fatty acyl donor, but not acyl-CoA or acyl-ACP. The polypeptide is Glycerol-3-phosphate acyltransferase (Proteus mirabilis (strain HI4320)).